A 410-amino-acid chain; its full sequence is Serine hydroxymethyltransferase (410 aa).

(6S)-5,6,7,8-tetrahydrofolate contacts are provided by residues L119 and 123–125; that span reads GHL. K228 carries the N6-(pyridoxal phosphate)lysine modification. A (6S)-5,6,7,8-tetrahydrofolate-binding site is contributed by 351-353; it reads SPF.

The protein belongs to the SHMT family. As to quaternary structure, homodimer. Pyridoxal 5'-phosphate is required as a cofactor.

It localises to the cytoplasm. The catalysed reaction is (6R)-5,10-methylene-5,6,7,8-tetrahydrofolate + glycine + H2O = (6S)-5,6,7,8-tetrahydrofolate + L-serine. The protein operates within one-carbon metabolism; tetrahydrofolate interconversion. Its pathway is amino-acid biosynthesis; glycine biosynthesis; glycine from L-serine: step 1/1. Functionally, catalyzes the reversible interconversion of serine and glycine with tetrahydrofolate (THF) serving as the one-carbon carrier. This reaction serves as the major source of one-carbon groups required for the biosynthesis of purines, thymidylate, methionine, and other important biomolecules. Also exhibits THF-independent aldolase activity toward beta-hydroxyamino acids, producing glycine and aldehydes, via a retro-aldol mechanism. The protein is Serine hydroxymethyltransferase of Alkaliphilus oremlandii (strain OhILAs) (Clostridium oremlandii (strain OhILAs)).